Consider the following 533-residue polypeptide: Metallothionein expression activator (533 aa).

2 consecutive C2H2-type zinc fingers follow at residues 443 to 472 (YVCL…SDRP) and 473 to 500 (YRCD…NGRP). The C2H2-type 3; atypical zinc-finger motif lies at 501–524 (YVCECLKRFNRLDALNRHKQRNIC).

The protein localises to the nucleus. In terms of biological role, regulates the transcription of genes required for cell separation. The polypeptide is Metallothionein expression activator (ace2) (Schizosaccharomyces pombe (strain 972 / ATCC 24843) (Fission yeast)).